Consider the following 869-residue polypeptide: Structure-specific endonuclease subunit SLX4 (869 aa).

Positions 40 to 59 (SPLSLPSPTSLLDFLSTSTS) are enriched in low complexity. 7 disordered regions span residues 40–79 (SPLS…EVLD), 92–116 (NRVV…ESPG), 165–199 (KANQ…INDL), 293–323 (GLSD…NPPK), 351–388 (TLLS…KKNE), 418–437 (ANGH…HISN), and 630–774 (KTSN…ASET). Residues 63–79 (ARSDTDGDKTQGKEVLD) show a composition bias toward basic and acidic residues. Polar residues-rich tracts occupy residues 165 to 174 (KANQTVSLQP) and 294 to 311 (LSDS…SATS). Basic residues predominate over residues 312–322 (KPRRVKAKNPP). Composition is skewed to polar residues over residues 647 to 657 (VDESTQGQSLG) and 664 to 673 (SIPQTATTQV). The span at 688–700 (VPVPSRRSTSTSK) shows a compositional bias: low complexity. Over residues 765–774 (IPSTGTASET) the composition is skewed to polar residues.

It belongs to the SLX4 family. Forms a heterodimer with SLX1. In terms of processing, phosphorylated in response to DNA damage.

Its subcellular location is the nucleus. Regulatory subunit of the SLX1-SLX4 structure-specific endonuclease that resolves DNA secondary structures generated during DNA repair and recombination. Has endonuclease activity towards branched DNA substrates, introducing single-strand cuts in duplex DNA close to junctions with ss-DNA. The chain is Structure-specific endonuclease subunit SLX4 from Paracoccidioides brasiliensis (strain Pb18).